A 2197-amino-acid chain; its full sequence is RNA1 polyprotein (2197 aa).

Residues 621–1167 (GLTDVFGVPL…YDWVYANGGK (547 aa)) lie on the Cytoplasmic side of the membrane. The SF3 helicase domain maps to 766 to 933 (VKRLSDLHKR…EGVAYNPSDP (168 aa)). An ATP-binding site is contributed by 796 to 803 (GGPRCGKS). The chain crosses the membrane as a helical span at residues 1168 to 1188 (LLLVLAAVILILFFGSACIKL). Residues 1189–1212 (MQAIFCGAAGGTVSMAAVGKMTVQ) lie on the Lumenal side of the membrane. Residue Asn1228 is glycosylated (N-linked (GlcNAc...) asparagine; by host). A Peptidase C3 domain is found at 1243–1475 (LAEAQFNESH…MPRYISHASF (233 aa)). Catalysis depends on for picornain 3C-like protease activity residues His1283, Glu1331, and Cys1433. The RdRp catalytic domain occupies 1765 to 1888 (SVALNCDYSR…SIKPDTMKYF (124 aa)).

Belongs to the nepoviruses RNA1 polyprotein family. In terms of processing, specific enzymatic cleavages by picornain 3C-like protease in vivo yield mature proteins. Picornain 3C-like protease is autocatalytically processed. NTB exists as NTB-VPg polyprotein as well as NTB mature protein. VPg is uridylylated by the polymerase and is covalently linked to the 5'-end of genomic RNA. This uridylylated form acts as a nucleotide-peptide primer for the polymerase.

Its subcellular location is the host endoplasmic reticulum lumen. The protein resides in the host endoplasmic reticulum membrane. The catalysed reaction is RNA(n) + a ribonucleoside 5'-triphosphate = RNA(n+1) + diphosphate. Picornain 3C-like protease is a thiol protease that cleaves at Gln-|-Gly or Gln-|-Ser sites in the P1 and P2 polyproteins. Functionally, the VPg-NTB polyprotein may act as a membrane-anchor for the replication complex. The protein is RNA1 polyprotein of Tomato ringspot virus (isolate raspberry) (ToRSV).